The chain runs to 828 residues: Periplasmic nitrate reductase (828 aa).

The segment at residues 1–32 (MNLSRRDFMKANAAMAAATAAGLSIPVKNVEA) is a signal peptide (tat-type signal). Positions 37-93 (IKWDKAVCRFCGTGCAVLVGTKDGRVVASQGDPDAEVNRGLNCIKGYFLPKIMYGKD) constitute a 4Fe-4S Mo/W bis-MGD-type domain. Residues Cys-44, Cys-47, Cys-51, and Cys-79 each coordinate [4Fe-4S] cluster. Mo-bis(molybdopterin guanine dinucleotide) is bound by residues Lys-81, Gln-148, Asn-173, Cys-177, 210–217 (WGSNMAEM), 241–245 (STFEH), Met-371, Gln-375, Asn-481, 507–508 (SD), Lys-530, Asp-557, and 717–726 (TGRVLEHWHT). A substrate-binding site is contributed by Phe-793. Mo-bis(molybdopterin guanine dinucleotide)-binding residues include Asn-801 and Lys-818.

It belongs to the prokaryotic molybdopterin-containing oxidoreductase family. NasA/NapA/NarB subfamily. As to quaternary structure, component of the periplasmic nitrate reductase NapAB complex composed of NapA and NapB. [4Fe-4S] cluster serves as cofactor. Mo-bis(molybdopterin guanine dinucleotide) is required as a cofactor. In terms of processing, predicted to be exported by the Tat system. The position of the signal peptide cleavage has not been experimentally proven.

It is found in the periplasm. It carries out the reaction 2 Fe(II)-[cytochrome] + nitrate + 2 H(+) = 2 Fe(III)-[cytochrome] + nitrite + H2O. In terms of biological role, catalytic subunit of the periplasmic nitrate reductase complex NapAB. Receives electrons from NapB and catalyzes the reduction of nitrate to nitrite. In Aggregatibacter actinomycetemcomitans (Actinobacillus actinomycetemcomitans), this protein is Periplasmic nitrate reductase.